Consider the following 282-residue polypeptide: MSDFSMETLKNLRQQTGVGLTKCKEALEHAKGNLEDAVVYLRKLGLASAGKKEHRETKEGVIAARVDERGAALVEVNVETDFVANNNVFRAFVTSLLSDLLDHELSDVDALALVMSSQEPSLSVEELKAVTMQTVGENIRISRAFYTPVNSGQSVGIYSHGNGKAVAIAFLSGSENQEALAKDIAMHIVASQPQFLSKESVPQEVLEREREVFSSQVAGKPQEVVEKITQGKFRAFFQEACLLEQAFIKDPEVTIQGLIDRAAKASGEPLKVEHFVFWKMGA.

The interval 80-83 (TDFV) is involved in Mg(2+) ion dislocation from EF-Tu.

The protein belongs to the EF-Ts family.

It localises to the cytoplasm. In terms of biological role, associates with the EF-Tu.GDP complex and induces the exchange of GDP to GTP. It remains bound to the aminoacyl-tRNA.EF-Tu.GTP complex up to the GTP hydrolysis stage on the ribosome. The chain is Elongation factor Ts (tsf) from Chlamydia trachomatis serovar D (strain ATCC VR-885 / DSM 19411 / UW-3/Cx).